Here is a 312-residue protein sequence, read N- to C-terminus: Urease accessory protein UreD (312 aa).

It belongs to the UreD family. UreD, UreF and UreG form a complex that acts as a GTP-hydrolysis-dependent molecular chaperone, activating the urease apoprotein by helping to assemble the nickel containing metallocenter of UreC. The UreE protein probably delivers the nickel.

The protein localises to the cytoplasm. In terms of biological role, required for maturation of urease via the functional incorporation of the urease nickel metallocenter. The chain is Urease accessory protein UreD from Marinomonas sp. (strain MWYL1).